A 587-amino-acid polypeptide reads, in one-letter code: Aspartate--tRNA ligase (587 aa).

Residue E174 coordinates L-aspartate. Residues 198-201 (QITK) form an aspartate region. Residue R220 participates in L-aspartate binding. ATP is bound by residues 220–222 (RDE) and Q229. H443 lines the L-aspartate pocket. E477 serves as a coordination point for ATP. R484 is a binding site for L-aspartate. Residue 529-532 (GLDR) coordinates ATP.

It belongs to the class-II aminoacyl-tRNA synthetase family. Type 1 subfamily. Homodimer.

It localises to the cytoplasm. The enzyme catalyses tRNA(Asp) + L-aspartate + ATP = L-aspartyl-tRNA(Asp) + AMP + diphosphate. Its function is as follows. Catalyzes the attachment of L-aspartate to tRNA(Asp) in a two-step reaction: L-aspartate is first activated by ATP to form Asp-AMP and then transferred to the acceptor end of tRNA(Asp). The chain is Aspartate--tRNA ligase from Streptococcus pneumoniae serotype 19F (strain G54).